A 505-amino-acid polypeptide reads, in one-letter code: ATP synthase subunit alpha (505 aa).

ATP is bound at residue 170–177 (GDRQTGKT).

This sequence belongs to the ATPase alpha/beta chains family. In terms of assembly, F-type ATPases have 2 components, CF(1) - the catalytic core - and CF(0) - the membrane proton channel. CF(1) has five subunits: alpha(3), beta(3), gamma(1), delta(1), epsilon(1). CF(0) has four main subunits: a(1), b(1), b'(1) and c(9-12).

It localises to the cellular thylakoid membrane. The catalysed reaction is ATP + H2O + 4 H(+)(in) = ADP + phosphate + 5 H(+)(out). Produces ATP from ADP in the presence of a proton gradient across the membrane. The alpha chain is a regulatory subunit. The polypeptide is ATP synthase subunit alpha (Synechococcus sp. (strain RCC307)).